A 323-amino-acid chain; its full sequence is MNKILFYLFVYGVVNSAAYDLLKAPNYFEEFVHRFNKDYGSEVEKLRRFKIFQHNLNEIINKNQNDSAKYEINKFSDLSKDETIAKYTGLSLPIQTQNFCKVIVLDQPPGKGPLEFDWRRLNKVTSVKNQGMCGACWAFATLASLESQFAIKHNQLINLSEQQMIDCDFVDAGCNGGLLHTAFEAIIKMGGVQLESDYPYEADNNNCRMNSNKFLVQVKDCYRYITVYEEKLKDLLRLVGPIPMAIDAADIVNYKQGIIKYCFNSGLNHAVLLVGYGVENNIPYWTFKNTWGTDWGEDGFFRVQQNINACGMRNELASTAVIY.

The first 16 residues, 1–16 (MNKILFYLFVYGVVNS), serve as a signal peptide directing secretion. Positions 17–112 (AAYDLLKAPN…IVLDQPPGKG (96 aa)) are cleaved as a propeptide — activation peptide. 3 disulfides stabilise this stretch: Cys133–Cys174, Cys167–Cys207, and Cys262–Cys310. Residue Cys136 is part of the active site. An N-linked (GlcNAc...) asparagine; by host glycan is attached at Asn158. Active-site residues include His269 and Asn289.

Belongs to the peptidase C1 family. In terms of assembly, interacts with chitinase/CHIA; this interaction maintains VCATH in the host endoplasmic reticulum. Post-translationally, synthesized as an inactive proenzyme and activated by proteolytic removal of the inhibitory propeptide.

The protein localises to the host endoplasmic reticulum. It catalyses the reaction Endopeptidase of broad specificity, hydrolyzing substrates of both cathepsin L and cathepsin B.. Cysteine protease that plays an essential role in host liquefaction to facilitate horizontal transmission of the virus. Accumulates within infected cells as an inactive proenzyme (proV-CATH), which is activated by proteolytic cleavage upon cell death. The sequence is that of Viral cathepsin (VCATH) from Lepidoptera (butterflies and moths).